We begin with the raw amino-acid sequence, 288 residues long: uncharacterized protein (288 aa).

The ATP-grasp domain maps to lysine 107–alanine 288. Residues lysine 145 and glutamine 178–alanine 188 each bind ATP. Residues aspartate 248, glutamate 261, and asparagine 263 each coordinate Mg(2+). Aspartate 248, glutamate 261, and asparagine 263 together coordinate Mn(2+).

The protein belongs to the RimK family.

This is an uncharacterized protein from Mycoplasma pneumoniae (strain ATCC 29342 / M129 / Subtype 1) (Mycoplasmoides pneumoniae).